The chain runs to 169 residues: Copper-resistant cuproprotein CopI (169 aa).

The signal sequence occupies residues 1 to 20 (MIKKTLLVIALTFTVTTAFA). Positions 98, 153, 158, and 163 each coordinate Cu(2+).

This sequence belongs to the CopI family.

The protein resides in the periplasm. Functionally, involved in copper tolerance. Mediates copper tolerance in aerobiosis. May also mediate tolerance under anaerobiosis. Not required for virulence or colonization in the mouse model. This Vibrio cholerae serotype O1 (strain ATCC 39315 / El Tor Inaba N16961) protein is Copper-resistant cuproprotein CopI.